A 476-amino-acid chain; its full sequence is Glutamate--tRNA ligase (476 aa).

The 'HIGH' region motif lies at 9–19 (PSPTGTLHIGT). The short motif at 248-252 (KLSKR) is the 'KMSKS' region element. K251 contributes to the ATP binding site.

The protein belongs to the class-I aminoacyl-tRNA synthetase family. Glutamate--tRNA ligase type 1 subfamily. Monomer.

It localises to the cytoplasm. It catalyses the reaction tRNA(Glu) + L-glutamate + ATP = L-glutamyl-tRNA(Glu) + AMP + diphosphate. In terms of biological role, catalyzes the attachment of glutamate to tRNA(Glu) in a two-step reaction: glutamate is first activated by ATP to form Glu-AMP and then transferred to the acceptor end of tRNA(Glu). The chain is Glutamate--tRNA ligase from Prochlorococcus marinus (strain MIT 9303).